Consider the following 247-residue polypeptide: Protein AC124 (247 aa).

Its subcellular location is the host cytoplasm. The protein resides in the host nucleus. Accelerates mortality in insect larvae. In Lepidoptera (butterflies and moths), this protein is Protein AC124.